A 528-amino-acid chain; its full sequence is OLD nuclease (528 aa).

The segment at 1-153 is ATPase domain N-terminus; it reads MLKRLQVKNF…LAQHLPSIRG (153 aa). Residue 31 to 35 coordinates ATP; the sequence is GAGKT. Residues 154 to 245 are dimerization domain; the sequence is SILGRLLQPV…RESDLTLPGD (92 aa). The interval 246–369 is ATPase domain C-terminus; the sequence is ELGLGIQSAI…FDTARNEVLF (124 aa). Residues 370-528 are toprim domain; sequence AKRALLVEGY…IRQVTRPMEE (159 aa). 4 residues coordinate a divalent metal cation: Glu377, Asp381, Asp431, and Asp433. Residues 440–461 are disordered; that stretch reads RADEETRRKQEQENKAEQEKNQ. A divalent metal cation-binding residues include Ser478 and Glu480. Arg487 functions as the Stabilizes transition state or protonates leaving group in the catalytic mechanism.

The protein belongs to the class 1 OLD nuclease family. Homodimer. The cofactor is Mg(2+). Requires Mn(2+) as cofactor. Ca(2+) is required as a cofactor.

It catalyses the reaction Exonucleolytic cleavage in the 5'- to 3'-direction to yield nucleoside 5'-phosphates.. In terms of biological role, an exodeoxyribonuclease that degrades linear or supercoiled dsDNA from 5'-3'. Nicks and linearizes circular DNA. Activity is not stimulated by ATP or AMP-PNP, although it has DNA-stimulated ATPase activity. This chain is OLD nuclease, found in Thermus scotoductus (strain ATCC 700910 / SA-01).